The chain runs to 167 residues: Small ribosomal subunit protein uS5 (167 aa).

The region spanning 11-74 is the S5 DRBM domain; it reads LQEKLIAVNR…EKARRNMINV (64 aa).

It belongs to the universal ribosomal protein uS5 family. In terms of assembly, part of the 30S ribosomal subunit. Contacts proteins S4 and S8.

With S4 and S12 plays an important role in translational accuracy. In terms of biological role, located at the back of the 30S subunit body where it stabilizes the conformation of the head with respect to the body. The polypeptide is Small ribosomal subunit protein uS5 (Shigella dysenteriae serotype 1 (strain Sd197)).